We begin with the raw amino-acid sequence, 180 residues long: Bifunctional protein PyrR (180 aa).

Residues 101-113 (VILVDDVLYTGRT) carry the PRPP-binding motif.

This sequence belongs to the purine/pyrimidine phosphoribosyltransferase family. PyrR subfamily. Homodimer and homohexamer; in equilibrium.

It carries out the reaction UMP + diphosphate = 5-phospho-alpha-D-ribose 1-diphosphate + uracil. In terms of biological role, regulates transcriptional attenuation of the pyrimidine nucleotide (pyr) operon by binding in a uridine-dependent manner to specific sites on pyr mRNA. This disrupts an antiterminator hairpin in the RNA and favors formation of a downstream transcription terminator, leading to a reduced expression of downstream genes. Functionally, also displays a weak uracil phosphoribosyltransferase activity which is not physiologically significant. In Bacillus mycoides (strain KBAB4) (Bacillus weihenstephanensis), this protein is Bifunctional protein PyrR.